The chain runs to 564 residues: Apyrase (564 aa).

A signal peptide spans 1-25 (MAGKPGIQLFVIFLLLSSFAAVVWA). D48, H50, D99, N131, H234, and H258 together coordinate a divalent metal cation. AMP is bound at residue R371. N-linked (GlcNAc...) asparagine glycosylation occurs at N391. Residues R406, F425, and D515 each coordinate AMP.

This sequence belongs to the 5'-nucleotidase family. The cofactor is a divalent metal cation. As to expression, female salivary gland (at protein level). Low-level expression in male tissues. Not detected in female carcasses without salivary glands.

It is found in the secreted. It catalyses the reaction a ribonucleoside 5'-triphosphate + 2 H2O = a ribonucleoside 5'-phosphate + 2 phosphate + 2 H(+). In terms of biological role, facilitates hematophagy by inhibiting ADP-dependent platelet aggregation in the host. Cleaves adenosine triphosphate (ATP) and adenosine diphosphate (ADP) to adenosine monophosphate (AMP) and inorganic phosphate. May reduce probing time by facilitating the speed of locating blood. This is Apyrase from Aedes albopictus (Asian tiger mosquito).